The chain runs to 406 residues: Formate-dependent phosphoribosylglycinamide formyltransferase (406 aa).

N(1)-(5-phospho-beta-D-ribosyl)glycinamide-binding positions include 28–29 and E88; that span reads EL. Residues R121, K162, 167 to 172, 202 to 205, and E210 each bind ATP; these read SSGKGQ and EGFI. The ATP-grasp domain occupies 126 to 320; sequence RLAAEELGCA…EFELHAKAIL (195 aa). E279 and E291 together coordinate Mg(2+). N(1)-(5-phospho-beta-D-ribosyl)glycinamide contacts are provided by residues D298, K367, and 374–375; that span reads RR.

Belongs to the PurK/PurT family. In terms of assembly, homodimer.

It catalyses the reaction N(1)-(5-phospho-beta-D-ribosyl)glycinamide + formate + ATP = N(2)-formyl-N(1)-(5-phospho-beta-D-ribosyl)glycinamide + ADP + phosphate + H(+). The protein operates within purine metabolism; IMP biosynthesis via de novo pathway; N(2)-formyl-N(1)-(5-phospho-D-ribosyl)glycinamide from N(1)-(5-phospho-D-ribosyl)glycinamide (formate route): step 1/1. Functionally, involved in the de novo purine biosynthesis. Catalyzes the transfer of formate to 5-phospho-ribosyl-glycinamide (GAR), producing 5-phospho-ribosyl-N-formylglycinamide (FGAR). Formate is provided by PurU via hydrolysis of 10-formyl-tetrahydrofolate. The protein is Formate-dependent phosphoribosylglycinamide formyltransferase of Janthinobacterium sp. (strain Marseille) (Minibacterium massiliensis).